Consider the following 435-residue polypeptide: Gamma-glutamyl phosphate reductase (435 aa).

This sequence belongs to the gamma-glutamyl phosphate reductase family.

The protein localises to the cytoplasm. It carries out the reaction L-glutamate 5-semialdehyde + phosphate + NADP(+) = L-glutamyl 5-phosphate + NADPH + H(+). The protein operates within amino-acid biosynthesis; L-proline biosynthesis; L-glutamate 5-semialdehyde from L-glutamate: step 2/2. In terms of biological role, catalyzes the NADPH-dependent reduction of L-glutamate 5-phosphate into L-glutamate 5-semialdehyde and phosphate. The product spontaneously undergoes cyclization to form 1-pyrroline-5-carboxylate. The chain is Gamma-glutamyl phosphate reductase from Synechococcus sp. (strain WH7803).